A 235-amino-acid chain; its full sequence is Phosphoribosylaminoimidazole-succinocarboxamide synthase (235 aa).

The protein belongs to the SAICAR synthetase family.

The catalysed reaction is 5-amino-1-(5-phospho-D-ribosyl)imidazole-4-carboxylate + L-aspartate + ATP = (2S)-2-[5-amino-1-(5-phospho-beta-D-ribosyl)imidazole-4-carboxamido]succinate + ADP + phosphate + 2 H(+). The protein operates within purine metabolism; IMP biosynthesis via de novo pathway; 5-amino-1-(5-phospho-D-ribosyl)imidazole-4-carboxamide from 5-amino-1-(5-phospho-D-ribosyl)imidazole-4-carboxylate: step 1/2. The sequence is that of Phosphoribosylaminoimidazole-succinocarboxamide synthase from Streptococcus sanguinis (strain SK36).